The primary structure comprises 427 residues: MKLLKRLVSVFAIVLAVGSNAFAGDEVRIVIDEGVDGARPIAVVPFVGSAPEDISKIVADDLRNSGKFNPIAVSQMPQHPTSAAEVNPEAWSNIGIDAIVIGQVVPSGNGYSITYQLIDTVGASGTPGTVLMQNSYTVTNKWLRYGAHTVSDEVFEKLTAIRGAFRTRIAYVVQKNGGSQPYEVRVADYDGYNQFIVNRSAQPIMSPAWSPDGQRLAYVSFENKKSQLVVQDLNSGSRKVVASFQGHNGAPAFSPDGSRLAFASSRDGVLNIYVMGANGGTPTQLTSGAGNNTEPAWSPDGNSILFTSDRSGSPQVYRMDASGGNATAVGGRGSAQISADGKTLVMINGNNNVVKQDLTTGVSEVLSTSFLGESPSLSPNGIMIIYSSTQGLGKVLQLVSADGRFKASLPGSDGQVKFPAWSPYLTK.

A signal peptide spans 1–23 (MKLLKRLVSVFAIVLAVGSNAFA).

This sequence belongs to the TolB family. In terms of assembly, the Tol-Pal system is composed of five core proteins: the inner membrane proteins TolA, TolQ and TolR, the periplasmic protein TolB and the outer membrane protein Pal. They form a network linking the inner and outer membranes and the peptidoglycan layer.

The protein resides in the periplasm. Part of the Tol-Pal system, which plays a role in outer membrane invagination during cell division and is important for maintaining outer membrane integrity. The polypeptide is Tol-Pal system protein TolB (Haemophilus influenzae (strain PittGG)).